Reading from the N-terminus, the 625-residue chain is Prothrombin (625 aa).

A signal peptide spans 1 to 24; it reads MARVRGPRLPGCLALAALFSLVHS. A propeptide spanning residues 25–43 is cleaved from the precursor; the sequence is QHVFLAHQQASSLLQRARR. One can recognise a Gla domain in the interval 44-90; it reads ANKGFLEEVRKGNLERECLEEPCSREEAFEALESLSATDAFWAKYTA. Residues Glu-50, Glu-51, Glu-58, Glu-60, Glu-63, Glu-64, Glu-69, Glu-70, Glu-73, and Glu-76 each carry the 4-carboxyglutamate modification. An intrachain disulfide couples Cys-61 to Cys-66. Disulfide bonds link Cys-91–Cys-104, Cys-109–Cys-187, Cys-130–Cys-170, Cys-158–Cys-182, Cys-214–Cys-292, Cys-235–Cys-275, Cys-263–Cys-287, Cys-339–Cys-485, Cys-394–Cys-410, Cys-539–Cys-553, and Cys-567–Cys-597. Kringle domains are found at residues 109–187 and 214–292; these read CAEG…VPVC and CVPD…LNYC. N-linked (GlcNAc...) asparagine glycosylation is found at Asn-120 and Asn-144. The region spanning 367–621 is the Peptidase S1 domain; it reads IVEGQDAEVG…LKKWIQKVID (255 aa). His-409 functions as the Charge relay system in the catalytic mechanism. N-linked (GlcNAc...) asparagine glycosylation is present at Asn-419. The Charge relay system role is filled by Asp-465. A high affinity receptor-binding region which is also known as the TP508 peptide region spans residues 554 to 576; it reads AGYKPGEGKRGDACEGDSGGPFV. The active-site Charge relay system is Ser-571.

The protein belongs to the peptidase S1 family. Heterodimer (named alpha-thrombin) of a light and a heavy chain; disulfide-linked. Forms a heterodimer with SERPINA5. In plasma, interacts (via N-terminus) with alpha-1-microglobulin; this interaction does not prevent the activation of prothrombin to thrombin. In terms of processing, the gamma-carboxyglutamyl residues, which bind calcium ions, result from the carboxylation of glutamyl residues by a microsomal enzyme, the vitamin K-dependent carboxylase. The modified residues are necessary for the calcium-dependent interaction with a negatively charged phospholipid surface, which is essential for the conversion of prothrombin to thrombin. Post-translationally, in the penultimate step of the coagulation cascade, prothrombin is converted to thrombin by the prothrombinase complex composed of factor Xa (F10), cofactor Va (F5), and phospholipids. This activation requires factor Xa-catalyzed sequential cleavage at 2 sites, Arg-317 and Arg-366, along 2 possible pathways. In the first pathway, the first cleavage occurs at Arg-317, leading to the formation of the inactive intermediate prethrombin-2. This pathway preferentially occurs on platelets and in the absence of cofactor Va. In the second pathway, the first cleavage occurs at Arg-366, which separates protease domain into 2 chains that remain connected through a disulfide bond and generates the active intermediate meizothrombin. The presence of cofactor Va directs activation along the meizothrombin pathway and greatly accelerates the rate of cleavage at Arg-366, but has a smaller effect on the cleavage of meizothrombin at Arg-317. Meizothrombin accumulates as an intermediate when prothrombinase is assembled on the membrane of red blood cells. In terms of tissue distribution, expressed by the liver and secreted in plasma.

The protein resides in the secreted. It localises to the extracellular space. The catalysed reaction is Selective cleavage of Arg-|-Gly bonds in fibrinogen to form fibrin and release fibrinopeptides A and B.. Its activity is regulated as follows. Activity is promoted in the presence of negatively charged surfaces, such as polyphosphate and dextran sulfate. Inhibited by SERPINA5. Its function is as follows. Thrombin, which cleaves bonds after Arg and Lys, converts fibrinogen to fibrin and activates factors V, VII, VIII, XIII, and, in complex with thrombomodulin, protein C. Functions in blood homeostasis, inflammation and wound healing. Activates coagulation factor XI (F11); activation is promoted by the contact with negatively charged surfaces. Triggers the production of pro-inflammatory cytokines, such as MCP-1/CCL2 and IL8/CXCL8, in endothelial cells. The chain is Prothrombin (F2) from Bos taurus (Bovine).